Here is a 1143-residue protein sequence, read N- to C-terminus: ATP-dependent helicase/deoxyribonuclease subunit B (1143 aa).

The region spanning 1–274 (MNYMHLGRAG…YGQTVKFQST (274 aa)) is the UvrD-like helicase ATP-binding domain. ATP is bound at residue 7 to 14 (GRAGTGKT). In terms of domain architecture, UvrD-like helicase C-terminal spans 267-565 (QTVKFQSTGL…RFSLVPPSLD (299 aa)). Residues C782, C1104, C1107, and C1113 each contribute to the [4Fe-4S] cluster site.

The protein belongs to the helicase family. AddB/RexB type 1 subfamily. In terms of assembly, heterodimer of AddA and AddB. The cofactor is Mg(2+). Requires [4Fe-4S] cluster as cofactor.

Its function is as follows. The heterodimer acts as both an ATP-dependent DNA helicase and an ATP-dependent, dual-direction single-stranded exonuclease. Recognizes the chi site generating a DNA molecule suitable for the initiation of homologous recombination. The AddB subunit has 5' -&gt; 3' nuclease activity but not helicase activity. The sequence is that of ATP-dependent helicase/deoxyribonuclease subunit B from Exiguobacterium sibiricum (strain DSM 17290 / CCUG 55495 / CIP 109462 / JCM 13490 / 255-15).